We begin with the raw amino-acid sequence, 309 residues long: ATP synthase gamma chain (309 aa).

Belongs to the ATPase gamma chain family. As to quaternary structure, F-type ATPases have 2 components, CF(1) - the catalytic core - and CF(0) - the membrane proton channel. CF(1) has five subunits: alpha(3), beta(3), gamma(1), delta(1), epsilon(1). CF(0) has three main subunits: a, b and c.

Its subcellular location is the cell membrane. Functionally, produces ATP from ADP in the presence of a proton gradient across the membrane. The gamma chain is believed to be important in regulating ATPase activity and the flow of protons through the CF(0) complex. The sequence is that of ATP synthase gamma chain from Mycobacterium sp. (strain JLS).